An 822-amino-acid polypeptide reads, in one-letter code: MGGRVFLAFCVWLTLLGAETQDSRDCARWCPENSSCVNATACRCNPGFSSSSEIFTSPTEICDDINECVPPSKVSCGKSSDCRNTEGSYDCVCNPGYELVSGAKTFKNESENTCQDVDECQQNPRLCKSYGTCVNTLGSFTCQCLPGFKFKPEDPKLCTDVNECTSGQNPCHSSTHCLNNVGSYQCRCRPGWQPIPGSPNGPNNTICEDVDECSSGLHQCDNSTVCFNTVGSYTCRCRPGWEPKHGIPNNQKDTVCKDMNFPTWTLPPGVHSQTLSQFFNKVQDLDRDFKTSSAKVTIQSILKELDELLEAPGDLETLPRFQQHCVATHLLDGLEDVLRGLSKNPSIGLLNFSYPAGTEFSLEVQKQVDRNVTLRQNQATMQLHWNLAQKSGDPGPSVVGLVSVPGMGKLLAEAPLVSEPENQVVRNETHQGLLPILLSDVISAFLSNNDTQNLSSPVTFIFSHRSVIPRRKVLCVFWEHGQNGCGHWATTGCSTMDTRDTSTICRCTHLSSFAVLMAPYDVQEEDPVLTVITYMGLSLSLLCLLLAALTFLLCKAIQNISTSLHLQLSLCLLLAHLLFLVAIDRTEHEVLCAIIASALHYLYLAAFTWMLLEALYLFLTARNLMVVNYSSINRFTKKLMFPVAYGVPAVTVAISAASRPHLYGTPSRCWLQPEKGFIWGFLGPVCAIFSVNLALLLVTLWILKNRLSSLNNEVSTLQNTRMLAFKATAQLFILGCTWCLGILQVGPAARVMAYLFTIINSLQGVFIFLVYCLLSQQVREQYRKWSKGFRKLRTESEMHTLSSSAKRDTPKPSTPGLLGLQS.

The first 18 residues, 1-18, serve as a signal peptide directing secretion; it reads MGGRVFLAFCVWLTLLGA. Residues 19-530 are Extracellular-facing; sequence ETQDSRDCAR…DVQEEDPVLT (512 aa). Residues 22-63 enclose the EGF-like 1 domain; sequence DSRDCARWCPENSSCVNATACRCNPGFSSSSEIFTSPTEICD. 5 disulfides stabilise this stretch: C26–C36, C30–C42, C44–C62, C68–C82, and C76–C91. N-linked (GlcNAc...) asparagine glycans are attached at residues N33 and N38. The region spanning 64–103 is the EGF-like 1; calcium-binding domain; that stretch reads DINECVPPSKVSCGKSSDCRNTEGSYDCVCNPGYELVSGA. N108 carries an N-linked (GlcNAc...) asparagine glycan. The EGF-like 2; calcium-binding domain occupies 116–159; sequence DVDECQQNPRLCKSYGTCVNTLGSFTCQCLPGFKFKPEDPKLCT. 5 disulfide bridges follow: C120–C133, C127–C142, C144–C158, C164–C177, and C171–C186. The 39-residue stretch at 160–198 folds into the EGF-like 3; calcium-binding domain; that stretch reads DVNECTSGQNPCHSSTHCLNNVGSYQCRCRPGWQPIPGS. N-linked (GlcNAc...) asparagine glycosylation is found at N203, N222, N351, N371, N427, N449, and N453. Positions 209-247 constitute an EGF-like 4; calcium-binding domain; it reads DVDECSSGLHQCDNSTVCFNTVGSYTCRCRPGWEPKHGI. Cystine bridges form between C213–C226 and C220–C235. A GAIN-B domain is found at 351–523; it reads NFSYPAGTEF…AVLMAPYDVQ (173 aa). Cystine bridges form between C475–C505 and C493–C507. A GPS region spans residues 475-523; it reads CVFWEHGQNGCGHWATTGCSTMDTRDTSTICRCTHLSSFAVLMAPYDVQ. Residues 531–551 form a helical membrane-spanning segment; sequence VITYMGLSLSLLCLLLAALTF. At 552 to 562 the chain is on the cytoplasmic side; the sequence is LLCKAIQNIST. Residues 563 to 583 form a helical membrane-spanning segment; that stretch reads SLHLQLSLCLLLAHLLFLVAI. The Extracellular portion of the chain corresponds to 584-589; the sequence is DRTEHE. A helical membrane pass occupies residues 590–610; that stretch reads VLCAIIASALHYLYLAAFTWM. Residues 611 to 637 lie on the Cytoplasmic side of the membrane; that stretch reads LLEALYLFLTARNLMVVNYSSINRFTK. A helical membrane pass occupies residues 638–658; that stretch reads KLMFPVAYGVPAVTVAISAAS. At 659–676 the chain is on the extracellular side; it reads RPHLYGTPSRCWLQPEKG. A helical transmembrane segment spans residues 677–697; it reads FIWGFLGPVCAIFSVNLALLL. Topologically, residues 698 to 728 are cytoplasmic; it reads VTLWILKNRLSSLNNEVSTLQNTRMLAFKAT. Residues 729 to 749 form a helical membrane-spanning segment; sequence AQLFILGCTWCLGILQVGPAA. The Extracellular segment spans residues 750-753; that stretch reads RVMA. The chain crosses the membrane as a helical span at residues 754–774; that stretch reads YLFTIINSLQGVFIFLVYCLL. Topologically, residues 775–822 are cytoplasmic; that stretch reads SQQVREQYRKWSKGFRKLRTESEMHTLSSSAKRDTPKPSTPGLLGLQS. The interval 797–822 is disordered; sequence EMHTLSSSAKRDTPKPSTPGLLGLQS.

The protein belongs to the G-protein coupled receptor 2 family. Adhesion G-protein coupled receptor (ADGR) subfamily. Forms a heterodimer, consisting of a large extracellular region non-covalently linked to a seven-transmembrane moiety. Interacts with chondroitin sulfate; the interaction with chondroitin sulfate is calcium-dependent. Interacts with CD55. Autoproteolytically cleaved into 2 subunits, an extracellular alpha subunit and a seven-transmembrane beta subunit.

The protein resides in the cell membrane. It is found in the cell projection. It localises to the ruffle membrane. Functionally, cell surface receptor that binds to the chondroitin sulfate moiety of glycosaminoglycan chains and promotes cell attachment. Promotes granulocyte chemotaxis, degranulation and adhesion. In macrophages, promotes the release of inflammatory cytokines, including IL8 and TNF. Signals probably through G-proteins. This is Adhesion G protein-coupled receptor E2 (ADGRE2) from Macaca mulatta (Rhesus macaque).